The sequence spans 402 residues: Succinyl-CoA--D-citramalate CoA-transferase (402 aa).

Residue Asp-174 is the Nucleophile of the active site.

The protein belongs to the CoA-transferase III family. Homodimer.

The catalysed reaction is (3R)-citramalate + succinyl-CoA = (3R)-citramalyl-CoA + succinate. It carries out the reaction (R)-malate + succinyl-CoA = (R)-malyl-CoA + succinate. Involved in the 3-hydroxypropionate cycle used for autotrophic carbon dioxide fixation, and in the glyoxylate assimilation cycle used to regenerate acetyl-CoA and produce pyruvate as universal precursor for biosynthesis. Catalyzes the transfer of CoA moiety from succinyl-CoA to D-citramalate to yield citramalyl-CoA. The polypeptide is Succinyl-CoA--D-citramalate CoA-transferase (Chloroflexus aurantiacus (strain ATCC 29366 / DSM 635 / J-10-fl)).